We begin with the raw amino-acid sequence, 380 residues long: Probable RAD2-like endonuclease 076L (380 aa).

The segment at 1–101 (MGIKNLTQFL…QKIVSKTDAI (101 aa)) is N-domain. Residues Asp32, Glu73, Glu191, Glu193, Asp212, Asp214, and Asp281 each coordinate Mg(2+). Residues 156–301 (IDRRRKYEFS…EKAYKYISDY (146 aa)) form an I-domain region.

This sequence belongs to the XPG/RAD2 endonuclease family. Mg(2+) serves as cofactor.

It is found in the host nucleus. Functionally, probable endonuclease. The sequence is that of Probable RAD2-like endonuclease 076L from Invertebrate iridescent virus 3 (IIV-3).